We begin with the raw amino-acid sequence, 161 residues long: MAEPTGLLEMSELPGDSSVPQVGTASGVSDVLRGAVGGGVRVQEAREGPVAEAARSMARMPGPVPGPIPSSVPGLASAPDPHQQLAFLEINRQLLFREYLDGSSMIPVRLLRDFEERRRLFVEGCKAREAAFDADPPQMDFAAVAFTVALTASEALSPLAD.

Disordered stretches follow at residues Met-1 to Ser-26 and Ala-54 to Ser-77.

Homodimer and heterodimer with EID2. Interacts with HDAC1 and HDAC2.

It localises to the nucleus. Functionally, acts as a repressor of MYOD-dependent transcription, glucocorticoid receptor-dependent transcription, and muscle differentiation. This Homo sapiens (Human) protein is EP300-interacting inhibitor of differentiation 2B.